Reading from the N-terminus, the 288-residue chain is Elongation factor Ts (288 aa).

An involved in Mg(2+) ion dislocation from EF-Tu region spans residues 82-85; that stretch reads TDFV.

This sequence belongs to the EF-Ts family.

The protein localises to the cytoplasm. Functionally, associates with the EF-Tu.GDP complex and induces the exchange of GDP to GTP. It remains bound to the aminoacyl-tRNA.EF-Tu.GTP complex up to the GTP hydrolysis stage on the ribosome. This is Elongation factor Ts from Chlorobium luteolum (strain DSM 273 / BCRC 81028 / 2530) (Pelodictyon luteolum).